Here is a 423-residue protein sequence, read N- to C-terminus: Serine hydroxymethyltransferase (423 aa).

(6S)-5,6,7,8-tetrahydrofolate is bound at residue 121 to 123; it reads GHI. The residue at position 227 (K227) is an N6-(pyridoxal phosphate)lysine. E242 is a binding site for (6S)-5,6,7,8-tetrahydrofolate.

Belongs to the SHMT family. In terms of assembly, homodimer. The cofactor is pyridoxal 5'-phosphate.

The protein resides in the cytoplasm. The catalysed reaction is 5,10-methylenetetrahydromethanopterin + glycine + H2O = 5,6,7,8-tetrahydromethanopterin + L-serine. The protein operates within amino-acid biosynthesis; glycine biosynthesis; glycine from L-serine: step 1/1. Its function is as follows. Catalyzes the reversible interconversion of serine and glycine with tetrahydromethanopterin (H4MPT) serving as the one-carbon carrier. Also exhibits a pteridine-independent aldolase activity toward beta-hydroxyamino acids, producing glycine and aldehydes, via a retro-aldol mechanism. In Methanothermobacter marburgensis (strain ATCC BAA-927 / DSM 2133 / JCM 14651 / NBRC 100331 / OCM 82 / Marburg) (Methanobacterium thermoautotrophicum), this protein is Serine hydroxymethyltransferase.